Consider the following 254-residue polypeptide: Imidazole glycerol phosphate synthase subunit HisF (254 aa).

Active-site residues include aspartate 12 and aspartate 131.

The protein belongs to the HisA/HisF family. As to quaternary structure, heterodimer of HisH and HisF.

The protein resides in the cytoplasm. The enzyme catalyses 5-[(5-phospho-1-deoxy-D-ribulos-1-ylimino)methylamino]-1-(5-phospho-beta-D-ribosyl)imidazole-4-carboxamide + L-glutamine = D-erythro-1-(imidazol-4-yl)glycerol 3-phosphate + 5-amino-1-(5-phospho-beta-D-ribosyl)imidazole-4-carboxamide + L-glutamate + H(+). Its pathway is amino-acid biosynthesis; L-histidine biosynthesis; L-histidine from 5-phospho-alpha-D-ribose 1-diphosphate: step 5/9. Functionally, IGPS catalyzes the conversion of PRFAR and glutamine to IGP, AICAR and glutamate. The HisF subunit catalyzes the cyclization activity that produces IGP and AICAR from PRFAR using the ammonia provided by the HisH subunit. The protein is Imidazole glycerol phosphate synthase subunit HisF of Leuconostoc mesenteroides subsp. mesenteroides (strain ATCC 8293 / DSM 20343 / BCRC 11652 / CCM 1803 / JCM 6124 / NCDO 523 / NBRC 100496 / NCIMB 8023 / NCTC 12954 / NRRL B-1118 / 37Y).